The following is a 759-amino-acid chain: Protein MTSS 1 (759 aa).

Positions 1–254 constitute an IMD domain; it reads MEAVIEKECS…EQVILDLKGS (254 aa). A coiled-coil region spans residues 108–157; it reads LQEQMEEWKKVANQLDKDHAKEYKKARQEIKNKSSDTLKLQKKAKKVDAQ. The segment at 259–309 is disordered; the sequence is SYQTPPSSPSTTMSRKSSVCSSLNSVNSSDSRSSGSHSHSPSSHYRYRSSN. Thr-262 bears the Phosphothreonine mark. Phosphoserine is present on residues Ser-265, Ser-266, Ser-275, and Ser-326. Residues 331 to 354 form a disordered region; the sequence is QDAFQSKSPSPMPPEAANQLSNGF. Residue Thr-429 is modified to Phosphothreonine. 2 disordered regions span residues 431-472 and 569-759; these read QRRK…AATR and KRPA…PRFS. Thr-607 carries the post-translational modification Phosphothreonine. Over residues 612 to 627 the composition is skewed to low complexity; that stretch reads PIPIKTPVIPVKTPTV. Ser-648 and Ser-651 each carry phosphoserine. Positions 660–670 are enriched in polar residues; sequence GVSNIPSSLWS. Pro residues predominate over residues 675 to 685; sequence VNPPLPGPKPS. The region spanning 731 to 748 is the WH2 domain; sequence QGEDMLNAIRRGVKLKKT.

This sequence belongs to the MTSS family. As to quaternary structure, binds to actin. As to expression, strongly expressed in the developing neurons and skeletal and cardiac muscles in embryos. Strongly expressed also in liver, outer layers of the kidney, and in the Purkinje cells of the brain.

It is found in the cytoplasm. The protein localises to the cytoskeleton. In terms of biological role, inhibits the nucleation of actin filaments in vitro. This Mus musculus (Mouse) protein is Protein MTSS 1.